The chain runs to 439 residues: Glutamate-1-semialdehyde 2,1-aminomutase (439 aa).

Lysine 279 is modified (N6-(pyridoxal phosphate)lysine).

It belongs to the class-III pyridoxal-phosphate-dependent aminotransferase family. HemL subfamily. Homodimer. Requires pyridoxal 5'-phosphate as cofactor.

It is found in the cytoplasm. The catalysed reaction is (S)-4-amino-5-oxopentanoate = 5-aminolevulinate. The protein operates within porphyrin-containing compound metabolism; protoporphyrin-IX biosynthesis; 5-aminolevulinate from L-glutamyl-tRNA(Glu): step 2/2. The chain is Glutamate-1-semialdehyde 2,1-aminomutase from Rhodopirellula baltica (strain DSM 10527 / NCIMB 13988 / SH1).